Consider the following 975-residue polypeptide: Cation-chloride cotransporter 1 (975 aa).

2 disordered regions span residues 1 to 29 and 104 to 124; these read MDSG…SKYR and EQIQ…TQGH. The Cytoplasmic segment spans residues 1–132; that stretch reads MDSGDIEEAG…GHPKPPALKM (132 aa). A helical transmembrane segment spans residues 133–153; sequence GTMMGVFVPCLQNILGIIYYI. Residues 154–167 lie on the Extracellular side of the membrane; it reads RFTWIVGMAGIGQG. A helical membrane pass occupies residues 168–188; the sequence is LVLVFLCGLCTFLTTISLSAI. Residues 189–214 are Cytoplasmic-facing; the sequence is ATNGAMKGGGPYYLIGRALGPEVGIS. A helical membrane pass occupies residues 215–235; sequence IGLCFFLGNAVAGALYVLGAV. The Extracellular portion of the chain corresponds to 236 to 273; the sequence is ETFLKAFPAAGIFRETITKVNGTAVSESIQSPNSHDLQ. N256 carries an N-linked (GlcNAc...) asparagine glycan. Residues 274-294 form a helical membrane-spanning segment; the sequence is VYGIVVTILLCFIVFGGVKMI. Over 295–296 the chain is Cytoplasmic; sequence NR. A helical transmembrane segment spans residues 297–317; it reads VAPAFLVPVLLSIFCIFIGIF. Topologically, residues 318-359 are extracellular; it reads LAKTDDPDNGITGLRLKSFKDNWGSAYQMTNDAGIPDPTGGT. A helical membrane pass occupies residues 360 to 380; the sequence is YWSFNELVGLFFPAVTGIMAG. At 381 to 398 the chain is on the cytoplasmic side; sequence SNRSASLKDTQKSIPVGT. Residues 399–419 traverse the membrane as a helical segment; the sequence is LAATLTTTSLYLISVLFFGAV. Residues 420–434 are Extracellular-facing; that stretch reads ATRDKLLTDRLLTAT. A helical membrane pass occupies residues 435-455; that stretch reads IAWPFPAIVHVGIILSTLGAA. Over 456–490 the chain is Cytoplasmic; that stretch reads LQSLTGAPRLLAAIANDDILPILNYFKVADTSEPH. Residues 491–511 form a helical membrane-spanning segment; it reads IATLFTAFICIGCVVIGNLDL. Residues 512–515 are Extracellular-facing; sequence ITPT. Residues 516–536 form a helical membrane-spanning segment; sequence VTMFYLLCYSGVNLSCFLLDL. Over 537–544 the chain is Cytoplasmic; that stretch reads LDAPSWRP. Residues 545–565 form a helical membrane-spanning segment; sequence RWKYHHWSLSFVGASLCIVIM. The Extracellular segment spans residues 566-571; that stretch reads FLISWS. Residues 572–592 form a helical membrane-spanning segment; the sequence is FTVVAIALASLIYKYVGLKGK. The Cytoplasmic segment spans residues 593 to 975; sequence AGDWGDGFKS…YHRDVVTLFT (383 aa).

This sequence belongs to the SLC12A transporter family. As to expression, expressed in young seedlings cotyledon tips, plant vasculature, root tips and axillary buds. Expressed in root vascular strand in the pericycle and other parenchyma cells bordering xylem vessels. Expressed in the xylem/symplast boundaries of rosette stems, rosette leaves and cauline leaves. Expressed in stipules, trichomes and hydathodes. Expressed in pollen grains.

It localises to the membrane. Cation/chloride cotransporter that mediates potassium-chloride and sodium-chloride cotransports. Involved in plant development and Cl(-) homeostasis. May be involved in long distance Cl(-) transport. Does not function as an H(+)-dependent cotransporter. This Arabidopsis thaliana (Mouse-ear cress) protein is Cation-chloride cotransporter 1 (CCC1).